We begin with the raw amino-acid sequence, 318 residues long: Probable ABC transporter permease protein MG189 (318 aa).

6 helical membrane-spanning segments follow: residues V42–F62, A98–I118, L134–Q154, P169–Y189, V230–G250, and L282–H302. Residues I99–F301 form the ABC transmembrane type-1 domain.

Belongs to the binding-protein-dependent transport system permease family. MalFG subfamily.

The protein resides in the cell membrane. Its function is as follows. Probably part of a binding-protein-dependent transport system. Probably responsible for the translocation of the substrate across the membrane. This is Probable ABC transporter permease protein MG189 from Mycoplasma genitalium (strain ATCC 33530 / DSM 19775 / NCTC 10195 / G37) (Mycoplasmoides genitalium).